A 135-amino-acid chain; its full sequence is Germinal center-associated signaling and motility-like protein (135 aa).

The segment at 1 to 68 (MGNYLLRKLS…ENGSGSEEVC (68 aa)) is disordered. Positions 22–48 (GNPDEERKRQEMTTFERKLQDQDKKSQ) are enriched in basic and acidic residues. Residues 26–50 (EERKRQEMTTFERKLQDQDKKSQEV) adopt a coiled-coil conformation. The segment covering 51 to 66 (SSTSNQENENGSGSEE) has biased composition (low complexity).

The polypeptide is Germinal center-associated signaling and motility-like protein (GCSAML) (Homo sapiens (Human)).